We begin with the raw amino-acid sequence, 113 residues long: UPF0102 protein Dgeo_1894 (113 aa).

The protein belongs to the UPF0102 family.

In Deinococcus geothermalis (strain DSM 11300 / CIP 105573 / AG-3a), this protein is UPF0102 protein Dgeo_1894.